The chain runs to 389 residues: MTKRRVVVGMSGGVDSSVTAWLLKEQGYDVVGLFMKNWEDDDDGEYCSTRQDWIDVVSVADLIGIDVEAVNFAAEYKDRVFAEFLREYSAGRTPNPDVLCNAEIKFKAFLDHAMSLDAEMIATGHYARVRERDGRFELLKAFDHTKDQSYFLHRLNQAQLSKTMFPLGEIPKTKVREIAAQIGLPNAKKKDSTGICFIGERPFRDFLNRYLPTKPGPMKTPDGKVIGEHIGLAFYTFGQRKGIGLGGSKDGSGEPWFVAAKDIASNTLYVVQGHDHPWLLSRQLVAGNVSWVAGEPPADGFSCGAKTRYRQADAACSFGRPALGRADGERFSLTFDDAQWAVTPGQSAVLYDGEICLGGGIIEFAATGQPGQTAPAAAAGHAGALAEAR.

Residues 9–16 (GMSGGVDS) and M35 contribute to the ATP site. The interval 95–97 (NPD) is interaction with target base in tRNA. C100 serves as the catalytic Nucleophile. A disulfide bridge links C100 with C196. G124 contributes to the ATP binding site. An interaction with tRNA region spans residues 146 to 148 (KDQ). C196 acts as the Cysteine persulfide intermediate in catalysis. The interaction with tRNA stretch occupies residues 308–309 (RY).

Belongs to the MnmA/TRMU family.

It is found in the cytoplasm. The enzyme catalyses S-sulfanyl-L-cysteinyl-[protein] + uridine(34) in tRNA + AH2 + ATP = 2-thiouridine(34) in tRNA + L-cysteinyl-[protein] + A + AMP + diphosphate + H(+). In terms of biological role, catalyzes the 2-thiolation of uridine at the wobble position (U34) of tRNA, leading to the formation of s(2)U34. The chain is tRNA-specific 2-thiouridylase MnmA from Burkholderia ambifaria (strain MC40-6).